Here is a 108-residue protein sequence, read N- to C-terminus: Small ribosomal subunit protein eS25B (108 aa).

The segment covering 1–20 (MPPKQQLSKAAKAAAALAGG) has biased composition (low complexity). Residues 1-30 (MPPKQQLSKAAKAAAALAGGKKSKKKWSKK) are disordered. Pro-2 is subject to N,N-dimethylproline; by NTM1. A compositionally biased stretch (basic residues) spans 21 to 30 (KKSKKKWSKK).

The protein belongs to the eukaryotic ribosomal protein eS25 family. As to quaternary structure, component of the small ribosomal subunit (SSU). Mature yeast ribosomes consist of a small (40S) and a large (60S) subunit. The 40S small subunit contains 1 molecule of ribosomal RNA (18S rRNA) and 33 different proteins (encoded by 57 genes). The large 60S subunit contains 3 rRNA molecules (25S, 5.8S and 5S rRNA) and 46 different proteins (encoded by 81 genes).

The protein resides in the cytoplasm. In terms of biological role, component of the ribosome, a large ribonucleoprotein complex responsible for the synthesis of proteins in the cell. The small ribosomal subunit (SSU) binds messenger RNAs (mRNAs) and translates the encoded message by selecting cognate aminoacyl-transfer RNA (tRNA) molecules. The large subunit (LSU) contains the ribosomal catalytic site termed the peptidyl transferase center (PTC), which catalyzes the formation of peptide bonds, thereby polymerizing the amino acids delivered by tRNAs into a polypeptide chain. The nascent polypeptides leave the ribosome through a tunnel in the LSU and interact with protein factors that function in enzymatic processing, targeting, and the membrane insertion of nascent chains at the exit of the ribosomal tunnel. The protein is Small ribosomal subunit protein eS25B of Saccharomyces cerevisiae (strain ATCC 204508 / S288c) (Baker's yeast).